A 348-amino-acid polypeptide reads, in one-letter code: Trace amine-associated receptor 9 (348 aa).

Topologically, residues 1–33 (MVNNFSQAEAVELCYKNVNESCIKTPYSPGPRS) are extracellular. N-linked (GlcNAc...) asparagine glycans are attached at residues Asn4 and Asn19. Cystine bridges form between Cys22–Cys186 and Cys105–Cys190. The chain crosses the membrane as a helical span at residues 34–58 (ILYAVLGFGAVLAAFGNLLVMIAIL). Over 59–68 (HFKQLHTPTN) the chain is Cytoplasmic. A helical membrane pass occupies residues 69–90 (FLIASLACADFLVGVTVMPFST). At 91–105 (VRSVESCWYFGDSYC) the chain is on the extracellular side. A helical transmembrane segment spans residues 106–128 (KFHTCFDTSFCFASLFHLCCISV). Positions 112 and 113 each coordinate spermidine. The Cytoplasmic portion of the chain corresponds to 129-148 (DRYIAVTDPLTYPTKFTVSV). Residues 149 to 170 (SGICIVLSWFFSVTYSFSIFYT) traverse the membrane as a helical segment. Over 171–196 (GANEEGIEELVVALTCVGGCQAPLNQ) the chain is Extracellular. Residues 174–187 (EEGIEELVVALTCV) are extracellular Loop 2 (ECL2). The chain crosses the membrane as a helical span at residues 197-218 (NWVLLCFLLFFIPNVAMVFIYS). At 219–256 (KIFLVAKHQARKIESTASQAQSSSESYKERVAKRERKA) the chain is on the cytoplasmic side. Residues 257-280 (AKTLGIAMAAFLVSWLPYLVDAVI) form a helical membrane-spanning segment. The Extracellular segment spans residues 281–293 (DAYMNFITPPYVY). The chain crosses the membrane as a helical span at residues 294–314 (EILVWCVYYNSAMNPLIYAFF). The Cytoplasmic segment spans residues 315 to 348 (YQWFGKAIKLIVSGKVLRTDSSTTNLFSEEVETD).

This sequence belongs to the G-protein coupled receptor 1 family.

Its subcellular location is the cell membrane. Its function is as follows. Olfactory receptor specific for trace amines, such as N,N-dimethylcyclohexylamine (DMCHA) and beta-phenylethylamine (beta-PEA). In contrast to mouse and rat orthologs, not activated by triethylamine, cadaverine (CAD) or spermidine. Trace amine compounds are enriched in animal body fluids and act on trace amine-associated receptors (TAARs) to elicit both intraspecific and interspecific innate behaviors. Trace amine-binding causes a conformation change that triggers signaling via G(s)-class of G alpha proteins (GNAL or GNAS). In mature olfactory sensory neurons, TAAR9 is coupled with GNAL/G(olf)G alpha protein and mediates activation of adenylate cyclase activity to activate cAMP signaling and eventually transmit odorant signals to achieve membrane depolarization. In immature olfactory sensory neurons, TAAR9 is coupled with GNAS/G(s) G alpha proteins. The chain is Trace amine-associated receptor 9 from Homo sapiens (Human).